Here is a 502-residue protein sequence, read N- to C-terminus: ATP synthase subunit alpha (502 aa).

Residue 169 to 176 (GDRQTGKT) coordinates ATP.

Belongs to the ATPase alpha/beta chains family. In terms of assembly, F-type ATPases have 2 components, CF(1) - the catalytic core - and CF(0) - the membrane proton channel. CF(1) has five subunits: alpha(3), beta(3), gamma(1), delta(1), epsilon(1). CF(0) has three main subunits: a(1), b(2) and c(9-12). The alpha and beta chains form an alternating ring which encloses part of the gamma chain. CF(1) is attached to CF(0) by a central stalk formed by the gamma and epsilon chains, while a peripheral stalk is formed by the delta and b chains.

The protein resides in the cell membrane. It carries out the reaction ATP + H2O + 4 H(+)(in) = ADP + phosphate + 5 H(+)(out). Functionally, produces ATP from ADP in the presence of a proton gradient across the membrane. The alpha chain is a regulatory subunit. This is ATP synthase subunit alpha from Bacillus velezensis (strain DSM 23117 / BGSC 10A6 / LMG 26770 / FZB42) (Bacillus amyloliquefaciens subsp. plantarum).